We begin with the raw amino-acid sequence, 107 residues long: Multidrug resistance protein mmr (107 aa).

Helical transmembrane passes span 2–19, 29–51, 58–77, and 82–104; these read AYLF…ATTL, LVPT…LSIS, VAYA…IAVL, and PVSV…LNLA.

It belongs to the drug/metabolite transporter (DMT) superfamily. Small multidrug resistance (SMR) (TC 2.A.7.1) family. Mmr subfamily.

It localises to the cell membrane. Its function is as follows. Multidrug efflux pump. Confers resistance to tetraphenylphosphonium (TPP), erythromycin, ethidium bromide, acriflavine, safranin O and pyronin Y. In Mycobacterium leprae (strain TN), this protein is Multidrug resistance protein mmr (mmr).